A 678-amino-acid polypeptide reads, in one-letter code: UvrABC system protein C (678 aa).

The region spanning 16 to 95 (VEPGVYRFRD…IKEFDPRFNI (80 aa)) is the GIY-YIG domain. Residues 208-243 (DRLIREMEQQMNAAAEELDFERAARLRDNIGAMRRA) enclose the UVR domain. Residues 477 to 508 (HLRDAEAAPEGRPEQGPRASARPEQGPRASAR) form a disordered region. Positions 479-491 (RDAEAAPEGRPEQ) are enriched in basic and acidic residues.

It belongs to the UvrC family. Interacts with UvrB in an incision complex.

It localises to the cytoplasm. Functionally, the UvrABC repair system catalyzes the recognition and processing of DNA lesions. UvrC both incises the 5' and 3' sides of the lesion. The N-terminal half is responsible for the 3' incision and the C-terminal half is responsible for the 5' incision. This chain is UvrABC system protein C, found in Mycolicibacterium vanbaalenii (strain DSM 7251 / JCM 13017 / BCRC 16820 / KCTC 9966 / NRRL B-24157 / PYR-1) (Mycobacterium vanbaalenii).